Consider the following 292-residue polypeptide: Protein CHLOROPLAST ENHANCING STRESS TOLERANCE, chloroplastic (292 aa).

Residues 1–15 are compositionally biased toward pro residues; that stretch reads MALLSPPSPPPPLPP. A chloroplast-targeting transit peptide spans 1 to 67; sequence MALLSPPSPP…RSSRRRRRVA (67 aa). Disordered regions lie at residues 1–119 and 206–225; these read MALL…DLED and MEAP…KATD. Composition is skewed to low complexity over residues 49–58 and 94–107; these read STANARAYSR and ASSD…ASSA. The chain crosses the membrane as a helical span at residues 267-287; that stretch reads ALYLLTAFPVIIGISVVLILF.

The protein belongs to the Y3IP1/CEST family.

Its subcellular location is the plastid. The protein resides in the chloroplast thylakoid membrane. Involved in light-induced chloroplast development and growth. Involved in the plant response to abiotic and photooxidative stresses. May be involved in the suppression of photooxidative damage. This chain is Protein CHLOROPLAST ENHANCING STRESS TOLERANCE, chloroplastic, found in Oryza sativa subsp. indica (Rice).